Reading from the N-terminus, the 1770-residue chain is Transposon Ty2-C Gag-Pol polyprotein (1770 aa).

Polar residues-rich tracts occupy residues 1 to 11 (MESQQLHQNPR), 19 to 39 (ASVTSKEVPSNQDPLAVSASN), and 49 to 60 (KVNSQQETTPGT). Disordered regions lie at residues 1 to 88 (MESQ…YQQH) and 355 to 453 (SQYK…LPDH). The interval 295–397 (ENNINVSDRL…SSKPRAAKAH (103 aa)) is RNA-binding. Residues 369-382 (TSPNTTNTKVTTRN) show a composition bias toward low complexity. 2 stretches are compositionally biased toward polar residues: residues 399–408 (IATSSKFSRV) and 415–435 (ESTVSSQYLSDDNELSLGQQQ). The active-site For protease activity; shared with dimeric partner is the Asp457. Residues 579 to 636 (NVNKSKSVNKYPYPLIHRMLGHANFRSIQKSLKKNAVTYLKESDIEWSNASTYQCPDC) are integrase-type zinc finger-like. Positions 656 to 831 (ESYEPFQYLH…AGLDITTILP (176 aa)) constitute an Integrase catalytic domain. Residues Asp667 and Asp732 each coordinate Mg(2+). 2 disordered regions span residues 1003-1038 (EMGGTVESDTTSPRHSSTFTARNQKRPGSPNDMIDL) and 1057-1205 (GGTE…TEIE). Polar residues-rich tracts occupy residues 1009–1024 (ESDTTSPRHSSTFTAR) and 1065–1082 (QRNSDTNIKYRTTNSTPS). Positions 1193–1227 (KKRSLEDNETEIEVSRDTWNNKNMRSLEPPRSKKR) match the Bipartite nuclear localization signal motif. The 139-residue stretch at 1353-1491 (NDYYITQLDI…DILGLEIKYQ (139 aa)) folds into the Reverse transcriptase Ty1/copia-type domain. Mg(2+) is bound by residues Asp1361, Asp1442, Asp1443, Asp1625, Glu1667, and Asp1700. The RNase H Ty1/copia-type domain occupies 1625–1767 (DASYGNQPYY…IKTFKLLTNK (143 aa)).

In terms of assembly, the capsid protein forms a homotrimer, from which the VLPs are assembled. The protease is a homodimer, whose active site consists of two apposed aspartic acid residues. Initially, virus-like particles (VLPs) are composed of the structural unprocessed proteins Gag and Gag-Pol, and also contain the host initiator methionine tRNA (tRNA(i)-Met) which serves as a primer for minus-strand DNA synthesis, and a dimer of genomic Ty RNA. Processing of the polyproteins occurs within the particle and proceeds by an ordered pathway, called maturation. First, the protease (PR) is released by autocatalytic cleavage of the Gag-Pol polyprotein, and this cleavage is a prerequisite for subsequent processing at the remaining sites to release the mature structural and catalytic proteins. Maturation takes place prior to the RT reaction and is required to produce transposition-competent VLPs.

Its subcellular location is the cytoplasm. The protein resides in the nucleus. The enzyme catalyses DNA(n) + a 2'-deoxyribonucleoside 5'-triphosphate = DNA(n+1) + diphosphate. It catalyses the reaction Endonucleolytic cleavage to 5'-phosphomonoester.. Capsid protein (CA) is the structural component of the virus-like particle (VLP), forming the shell that encapsulates the retrotransposons dimeric RNA genome. The particles are assembled from trimer-clustered units and there are holes in the capsid shells that allow for the diffusion of macromolecules. CA also has nucleocapsid-like chaperone activity, promoting primer tRNA(i)-Met annealing to the multipartite primer-binding site (PBS), dimerization of Ty2 RNA and initiation of reverse transcription. In terms of biological role, the aspartyl protease (PR) mediates the proteolytic cleavages of the Gag and Gag-Pol polyproteins after assembly of the VLP. Functionally, reverse transcriptase/ribonuclease H (RT) is a multifunctional enzyme that catalyzes the conversion of the retro-elements RNA genome into dsDNA within the VLP. The enzyme displays a DNA polymerase activity that can copy either DNA or RNA templates, and a ribonuclease H (RNase H) activity that cleaves the RNA strand of RNA-DNA heteroduplexes during plus-strand synthesis and hydrolyzes RNA primers. The conversion leads to a linear dsDNA copy of the retrotransposon that includes long terminal repeats (LTRs) at both ends. Its function is as follows. Integrase (IN) targets the VLP to the nucleus, where a subparticle preintegration complex (PIC) containing at least integrase and the newly synthesized dsDNA copy of the retrotransposon must transit the nuclear membrane. Once in the nucleus, integrase performs the integration of the dsDNA into the host genome. The sequence is that of Transposon Ty2-C Gag-Pol polyprotein (TY2B-C) from Saccharomyces cerevisiae (strain ATCC 204508 / S288c) (Baker's yeast).